Consider the following 90-residue polypeptide: UPF0237 protein MMP0657 (90 aa).

In terms of domain architecture, ACT spans 5 to 79; that stretch reads VITVVGVDKP…SEIGVKINVQ (75 aa).

The protein belongs to the UPF0237 family.

The sequence is that of UPF0237 protein MMP0657 from Methanococcus maripaludis (strain DSM 14266 / JCM 13030 / NBRC 101832 / S2 / LL).